We begin with the raw amino-acid sequence, 814 residues long: Transcription factor oryO (814 aa).

Disordered stretches follow at residues 1–59 (MTAR…PACN) and 699–723 (PMDGSSTGLSDRTPPSESELSSIPP). Composition is skewed to polar residues over residues 16-27 (ANPTVRDQTQQD) and 49-59 (QPDNTSSPACN). Residues 58–85 (CNQCRTRKIRCDRQQPKCSNCRRADVEC) constitute a DNA-binding region (zn(2)-C6 fungal-type). The span at 713–723 (PSESELSSIPP) shows a compositional bias: low complexity.

The protein resides in the nucleus. Functionally, transcription factor that regulates the expression of the gene cluster that mediates the biosynthesis of oryzines, natural products with an unusual maleidride backbone. This is Transcription factor oryO from Aspergillus oryzae (strain ATCC 42149 / RIB 40) (Yellow koji mold).